The chain runs to 457 residues: Argininosuccinate lyase (457 aa).

It belongs to the lyase 1 family. Argininosuccinate lyase subfamily.

The protein resides in the cytoplasm. It catalyses the reaction 2-(N(omega)-L-arginino)succinate = fumarate + L-arginine. It functions in the pathway amino-acid biosynthesis; L-arginine biosynthesis; L-arginine from L-ornithine and carbamoyl phosphate: step 3/3. This Aquifex aeolicus (strain VF5) protein is Argininosuccinate lyase.